The sequence spans 370 residues: NADH-quinone oxidoreductase subunit D 2 (370 aa).

Belongs to the complex I 49 kDa subunit family. NDH-1 is composed of 14 different subunits. Subunits NuoB, C, D, E, F, and G constitute the peripheral sector of the complex.

The protein localises to the cell inner membrane. It catalyses the reaction a quinone + NADH + 5 H(+)(in) = a quinol + NAD(+) + 4 H(+)(out). NDH-1 shuttles electrons from NADH, via FMN and iron-sulfur (Fe-S) centers, to quinones in the respiratory chain. The immediate electron acceptor for the enzyme in this species is believed to be ubiquinone. Couples the redox reaction to proton translocation (for every two electrons transferred, four hydrogen ions are translocated across the cytoplasmic membrane), and thus conserves the redox energy in a proton gradient. The sequence is that of NADH-quinone oxidoreductase subunit D 2 from Solibacter usitatus (strain Ellin6076).